A 284-amino-acid chain; its full sequence is Pantothenate synthetase (284 aa).

30 to 37 (MGNLHDGH) provides a ligand contact to ATP. The Proton donor role is filled by His-37. (R)-pantoate is bound at residue Gln-61. Gln-61 lines the beta-alanine pocket. 149 to 152 (GEKD) lines the ATP pocket. (R)-pantoate is bound at residue Gln-155. Residues Val-178 and 186–189 (LSSR) contribute to the ATP site.

This sequence belongs to the pantothenate synthetase family. As to quaternary structure, homodimer.

It localises to the cytoplasm. The enzyme catalyses (R)-pantoate + beta-alanine + ATP = (R)-pantothenate + AMP + diphosphate + H(+). It participates in cofactor biosynthesis; (R)-pantothenate biosynthesis; (R)-pantothenate from (R)-pantoate and beta-alanine: step 1/1. Catalyzes the condensation of pantoate with beta-alanine in an ATP-dependent reaction via a pantoyl-adenylate intermediate. The polypeptide is Pantothenate synthetase (Klebsiella pneumoniae subsp. pneumoniae (strain ATCC 700721 / MGH 78578)).